Reading from the N-terminus, the 377-residue chain is Pulmonary surfactant-associated protein B (377 aa).

The first 22 residues, 1 to 22 (MAKSHLLQWLLLLPTLCCPGAA), serve as a signal peptide directing secretion. Positions 23 to 191 (ITSASSLECA…PHTQDFSEQQ (169 aa)) are excised as a propeptide. Residues 24–64 (TSASSLECAQGPQFWCQSLEHAVQCRALGHCLQEVWGHAGA) enclose the Saposin A-type domain. 3 consecutive Saposin B-type domains span residues 64 to 146 (ANDL…PRGQ), 195 to 272 (PLPF…STED), and 291 to 366 (QDTE…EAPA). 9 disulfide bridges follow: Cys68–Cys142, Cys71–Cys136, Cys99–Cys111, Cys199–Cys268, Cys202–Cys262, Cys226–Cys237, Cys295–Cys362, Cys298–Cys356, and Cys321–Cys331. A propeptide spanning residues 271-377 (EDAMGPALPA…PLQCFQTPHL (107 aa)) is cleaved from the precursor. Asn307 carries N-linked (GlcNAc...) asparagine glycosylation.

Homodimer; disulfide-linked.

The protein localises to the secreted. The protein resides in the extracellular space. It is found in the surface film. In terms of biological role, pulmonary surfactant-associated proteins promote alveolar stability by lowering the surface tension at the air-liquid interface in the peripheral air spaces. SP-B increases the collapse pressure of palmitic acid to nearly 70 millinewtons per meter. The protein is Pulmonary surfactant-associated protein B (Sftpb) of Mus musculus (Mouse).